A 452-amino-acid polypeptide reads, in one-letter code: Poly(A) polymerase I (452 aa).

Active-site residues include Asp-68, Asp-70, and Asp-150. Positions 427–452 (EQQRLHPKPKKKYYRPRRRKTTCSAE) are disordered. Basic residues predominate over residues 431-452 (LHPKPKKKYYRPRRRKTTCSAE).

The protein belongs to the tRNA nucleotidyltransferase/poly(A) polymerase family.

It catalyses the reaction RNA(n) + ATP = RNA(n)-3'-adenine ribonucleotide + diphosphate. Adds poly(A) tail to the 3' end of many RNAs, which usually targets these RNAs for decay. Plays a significant role in the global control of gene expression, through influencing the rate of transcript degradation, and in the general RNA quality control. The chain is Poly(A) polymerase I from Haemophilus influenzae (strain ATCC 51907 / DSM 11121 / KW20 / Rd).